The primary structure comprises 253 residues: Adenosylcobinamide-GDP ribazoletransferase (253 aa).

Helical transmembrane passes span 33–53, 106–126, 132–152, and 178–198; these read ISPI…YLIL, VGSG…VALL, LYTI…SLYI, and ILLL…FIIF.

Belongs to the CobS family. Mg(2+) serves as cofactor.

The protein localises to the cell membrane. The enzyme catalyses alpha-ribazole + adenosylcob(III)inamide-GDP = adenosylcob(III)alamin + GMP + H(+). It carries out the reaction alpha-ribazole 5'-phosphate + adenosylcob(III)inamide-GDP = adenosylcob(III)alamin 5'-phosphate + GMP + H(+). It functions in the pathway cofactor biosynthesis; adenosylcobalamin biosynthesis; adenosylcobalamin from cob(II)yrinate a,c-diamide: step 7/7. Its function is as follows. Joins adenosylcobinamide-GDP and alpha-ribazole to generate adenosylcobalamin (Ado-cobalamin). Also synthesizes adenosylcobalamin 5'-phosphate from adenosylcobinamide-GDP and alpha-ribazole 5'-phosphate. The chain is Adenosylcobinamide-GDP ribazoletransferase from Saccharolobus solfataricus (strain ATCC 35092 / DSM 1617 / JCM 11322 / P2) (Sulfolobus solfataricus).